We begin with the raw amino-acid sequence, 378 residues long: N-acetyldiaminopimelate deacetylase (378 aa).

Aspartate 65 is an active-site residue. Glutamate 124 acts as the Proton acceptor in catalysis.

This sequence belongs to the peptidase M20A family. N-acetyldiaminopimelate deacetylase subfamily.

It carries out the reaction N-acetyl-(2S,6S)-2,6-diaminopimelate + H2O = (2S,6S)-2,6-diaminopimelate + acetate. It functions in the pathway amino-acid biosynthesis; L-lysine biosynthesis via DAP pathway; LL-2,6-diaminopimelate from (S)-tetrahydrodipicolinate (acetylase route): step 3/3. Its function is as follows. Catalyzes the conversion of N-acetyl-diaminopimelate to diaminopimelate and acetate. The protein is N-acetyldiaminopimelate deacetylase of Anoxybacillus flavithermus (strain DSM 21510 / WK1).